A 90-amino-acid chain; its full sequence is Small ribosomal subunit protein bS16 (90 aa).

This sequence belongs to the bacterial ribosomal protein bS16 family.

This is Small ribosomal subunit protein bS16 from Bacillus anthracis (strain A0248).